Reading from the N-terminus, the 622-residue chain is 1-deoxy-D-xylulose-5-phosphate synthase (622 aa).

Residues histidine 80 and 121–123 (GHS) contribute to the thiamine diphosphate site. Position 152 (aspartate 152) interacts with Mg(2+). Thiamine diphosphate contacts are provided by residues 153–154 (GA), asparagine 181, tyrosine 288, and glutamate 370. Asparagine 181 serves as a coordination point for Mg(2+).

It belongs to the transketolase family. DXPS subfamily. Homodimer. Requires Mg(2+) as cofactor. Thiamine diphosphate serves as cofactor.

The catalysed reaction is D-glyceraldehyde 3-phosphate + pyruvate + H(+) = 1-deoxy-D-xylulose 5-phosphate + CO2. Its pathway is metabolic intermediate biosynthesis; 1-deoxy-D-xylulose 5-phosphate biosynthesis; 1-deoxy-D-xylulose 5-phosphate from D-glyceraldehyde 3-phosphate and pyruvate: step 1/1. Catalyzes the acyloin condensation reaction between C atoms 2 and 3 of pyruvate and glyceraldehyde 3-phosphate to yield 1-deoxy-D-xylulose-5-phosphate (DXP). This chain is 1-deoxy-D-xylulose-5-phosphate synthase, found in Shewanella oneidensis (strain ATCC 700550 / JCM 31522 / CIP 106686 / LMG 19005 / NCIMB 14063 / MR-1).